A 282-amino-acid polypeptide reads, in one-letter code: HTH-type transcriptional activator RhaR (282 aa).

An HTH araC/xylS-type domain is found at 179–277 (DKLITALAGS…GMTPVQWRHR (99 aa)). DNA-binding regions (H-T-H motif) lie at residues 196–217 (EKFCEQEQCSERALRQQFRTQT) and 244–267 (VSEVAMRCGFEDSNYFSVVFNREV).

Binds DNA as a dimer.

Its subcellular location is the cytoplasm. Its function is as follows. Activates expression of the rhaSR operon in response to L-rhamnose. The chain is HTH-type transcriptional activator RhaR from Enterobacter sp. (strain 638).